A 122-amino-acid polypeptide reads, in one-letter code: LYR motif-containing protein 1 (122 aa).

It belongs to the complex I LYR family.

The protein is LYR motif-containing protein 1 (lyrm1) of Xenopus laevis (African clawed frog).